The primary structure comprises 122 residues: Large ribosomal subunit protein uL14 (122 aa).

This sequence belongs to the universal ribosomal protein uL14 family. As to quaternary structure, part of the 50S ribosomal subunit. Forms a cluster with proteins L3 and L19. In the 70S ribosome, L14 and L19 interact and together make contacts with the 16S rRNA in bridges B5 and B8.

Its function is as follows. Binds to 23S rRNA. Forms part of two intersubunit bridges in the 70S ribosome. In Chlamydia abortus (strain DSM 27085 / S26/3) (Chlamydophila abortus), this protein is Large ribosomal subunit protein uL14.